A 373-amino-acid chain; its full sequence is Trifolitoxin-processing protein TfxB (373 aa).

This sequence to E.coli McbC which is involved in the processing of microcin B17 (MCCB17).

It localises to the cytoplasm. Functionally, the actions of the proteins TfxB, TfxD and TfxF are implicated in the processing of the inactive trifolitoxin (TfxA) precursor into the active peptide. The chain is Trifolitoxin-processing protein TfxB (tfxB) from Rhizobium leguminosarum bv. trifolii.